A 419-amino-acid polypeptide reads, in one-letter code: Putative zinc metalloprotease SPy_1963/M5005_Spy1674 (419 aa).

His-18 contacts Zn(2+). The active site involves Glu-19. Zn(2+) is bound at residue His-22. Helical transmembrane passes span 169–191 (LITN…ILLV), 301–323 (LAWS…FSLN), 343–365 (LESV…LIPI), and 392–411 (AYIT…AVTW). The 100-residue stretch at 175 to 274 (GPMNNFILGI…LKTVAVKPQK (100 aa)) folds into the PDZ domain.

Belongs to the peptidase M50B family. The cofactor is Zn(2+).

The protein resides in the cell membrane. The sequence is that of Putative zinc metalloprotease SPy_1963/M5005_Spy1674 from Streptococcus pyogenes serotype M1.